The following is a 295-amino-acid chain: Ethanolamine ammonia-lyase small subunit (295 aa).

Val-207, Glu-228, and Cys-258 together coordinate adenosylcob(III)alamin.

Belongs to the EutC family. As to quaternary structure, the basic unit is a heterodimer which dimerizes to form tetramers. The heterotetramers trimerize; 6 large subunits form a core ring with 6 small subunits projecting outwards. Adenosylcob(III)alamin is required as a cofactor.

Its subcellular location is the bacterial microcompartment. It carries out the reaction ethanolamine = acetaldehyde + NH4(+). Its pathway is amine and polyamine degradation; ethanolamine degradation. Functionally, catalyzes the deamination of various vicinal amino-alcohols to oxo compounds. Allows this organism to utilize ethanolamine as the sole source of nitrogen and carbon in the presence of external vitamin B12. The protein is Ethanolamine ammonia-lyase small subunit of Escherichia coli (strain 55989 / EAEC).